Consider the following 405-residue polypeptide: Replication factor C large subunit (405 aa).

Position 47-54 (47-54 (GPPGVGKT)) interacts with ATP.

This sequence belongs to the activator 1 small subunits family. RfcL subfamily. Heteromultimer composed of small subunits (RfcS) and large subunits (RfcL).

In terms of biological role, part of the RFC clamp loader complex which loads the PCNA sliding clamp onto DNA. This is Replication factor C large subunit from Saccharolobus islandicus (strain M.16.4 / Kamchatka #3) (Sulfolobus islandicus).